Consider the following 295-residue polypeptide: Diaminopimelate epimerase (295 aa).

2 residues coordinate substrate: Asn11 and Asn67. The active-site Proton donor is Cys76. Substrate-binding positions include 77–78 (GN), Asn171, Asn210, and 228–229 (ER). The active-site Proton acceptor is the Cys237. Residue 238–239 (GT) participates in substrate binding.

This sequence belongs to the diaminopimelate epimerase family. Homodimer.

The protein localises to the cytoplasm. The catalysed reaction is (2S,6S)-2,6-diaminopimelate = meso-2,6-diaminopimelate. It functions in the pathway amino-acid biosynthesis; L-lysine biosynthesis via DAP pathway; DL-2,6-diaminopimelate from LL-2,6-diaminopimelate: step 1/1. Catalyzes the stereoinversion of LL-2,6-diaminopimelate (L,L-DAP) to meso-diaminopimelate (meso-DAP), a precursor of L-lysine. This is Diaminopimelate epimerase from Methanocaldococcus jannaschii (strain ATCC 43067 / DSM 2661 / JAL-1 / JCM 10045 / NBRC 100440) (Methanococcus jannaschii).